Here is a 612-residue protein sequence, read N- to C-terminus: RNA-binding protein MRN1 (612 aa).

The segment covering Met1–Asn28 has biased composition (low complexity). Disordered stretches follow at residues Met1 to Ser57 and Pro105 to Gln125. 2 stretches are compositionally biased toward polar residues: residues Tyr42–Ser57 and Asp115–Gln125. 4 consecutive RRM domains span residues Arg201–Pro274, Arg292–Gln379, Arg431–His504, and Arg522–Asp602.

The protein localises to the cytoplasm. In terms of biological role, RNA-binding protein that binds specific categories of mRNAs, including those that contain upstream open reading frames (uORFs) and internal ribosome entry sites (IRES). Probably involved in translational regulation. This chain is RNA-binding protein MRN1 (MRN1), found in Saccharomyces cerevisiae (strain ATCC 204508 / S288c) (Baker's yeast).